The following is a 193-amino-acid chain: MAKLYFNYSTMNAGKSTMLLQASYNYQERGMRTLIFTAAFDDRAGVGRVASRIGLSSEARTFDENTDLFAEVAALHAQAPVACVFVDEANFLSEHHVWQLANIADRLNIPVMTYGLRTDFQGKLFPASKELLAIADELREIRTICHCGRKATMVARFDSEGKVVTEGAQIEVGGNGKYVSFCRRHWVETFNCS.

Residues 9-16 (STMNAGKS) and 87-90 (DEAN) each bind ATP. Catalysis depends on glutamate 88, which acts as the Proton acceptor. Zn(2+) contacts are provided by cysteine 145, cysteine 147, cysteine 182, and histidine 185.

The protein belongs to the thymidine kinase family. As to quaternary structure, homotetramer.

The protein localises to the cytoplasm. It carries out the reaction thymidine + ATP = dTMP + ADP + H(+). This Agrobacterium fabrum (strain C58 / ATCC 33970) (Agrobacterium tumefaciens (strain C58)) protein is Thymidine kinase.